Reading from the N-terminus, the 480-residue chain is Bifunctional protein GlmU (480 aa).

The segment at 1-247 (MATPIDVVIM…AAQVAGVNSP (247 aa)) is pyrophosphorylase. UDP-N-acetyl-alpha-D-glucosamine contacts are provided by residues lysine 24, glutamine 86, 91 to 92 (GT), 113 to 115 (SGD), glycine 150, glutamate 172, and asparagine 245. Aspartate 115 is a Mg(2+) binding site. Residue asparagine 245 participates in Mg(2+) binding. The linker stretch occupies residues 248–268 (VQLAELERVYQLRQATALMEQ). The N-acetyltransferase stretch occupies residues 269 to 480 (GVRLADPARF…WKRPVKVSKG (212 aa)). Residues arginine 355 and lysine 373 each contribute to the UDP-N-acetyl-alpha-D-glucosamine site. Residue histidine 385 is the Proton acceptor of the active site. Tyrosine 388 and asparagine 399 together coordinate UDP-N-acetyl-alpha-D-glucosamine. Acetyl-CoA contacts are provided by residues alanine 402, 408–409 (NY), serine 427, glycine 445, and arginine 462.

This sequence in the N-terminal section; belongs to the N-acetylglucosamine-1-phosphate uridyltransferase family. It in the C-terminal section; belongs to the transferase hexapeptide repeat family. Homotrimer. Requires Mg(2+) as cofactor.

Its subcellular location is the cytoplasm. It carries out the reaction alpha-D-glucosamine 1-phosphate + acetyl-CoA = N-acetyl-alpha-D-glucosamine 1-phosphate + CoA + H(+). The catalysed reaction is N-acetyl-alpha-D-glucosamine 1-phosphate + UTP + H(+) = UDP-N-acetyl-alpha-D-glucosamine + diphosphate. Its pathway is nucleotide-sugar biosynthesis; UDP-N-acetyl-alpha-D-glucosamine biosynthesis; N-acetyl-alpha-D-glucosamine 1-phosphate from alpha-D-glucosamine 6-phosphate (route II): step 2/2. The protein operates within nucleotide-sugar biosynthesis; UDP-N-acetyl-alpha-D-glucosamine biosynthesis; UDP-N-acetyl-alpha-D-glucosamine from N-acetyl-alpha-D-glucosamine 1-phosphate: step 1/1. It functions in the pathway bacterial outer membrane biogenesis; LPS lipid A biosynthesis. Functionally, catalyzes the last two sequential reactions in the de novo biosynthetic pathway for UDP-N-acetylglucosamine (UDP-GlcNAc). The C-terminal domain catalyzes the transfer of acetyl group from acetyl coenzyme A to glucosamine-1-phosphate (GlcN-1-P) to produce N-acetylglucosamine-1-phosphate (GlcNAc-1-P), which is converted into UDP-GlcNAc by the transfer of uridine 5-monophosphate (from uridine 5-triphosphate), a reaction catalyzed by the N-terminal domain. The sequence is that of Bifunctional protein GlmU from Polaromonas sp. (strain JS666 / ATCC BAA-500).